We begin with the raw amino-acid sequence, 148 residues long: Leghemoglobin 29 (148 aa).

In terms of domain architecture, Globin spans 2 to 148 (EFTLRQEALV…LAVAIMKEMS (147 aa)). At Tyr30 the chain carries Nitrated tyrosine. Ser45 provides a ligand contact to heme b. At Ser45 the chain carries Phosphoserine. His63 provides a ligand contact to O2. 2 residues coordinate heme b: His95 and Lys98. Residue Tyr136 is modified to Nitrated tyrosine.

This sequence belongs to the plant globin family. As to quaternary structure, monomer. Post-translationally, nitrated in effective nodules and particularly in hypoxic conditions; this mechanism may play a protective role in the symbiosis by buffering toxic peroxynitrite NO(2)(-). Nitration level decrease during nodule senescence. In terms of processing, phosphorylation at Ser-45 disrupts the molecular environment of its porphyrin ring oxygen binding pocket, thus leading to a reduced oxygen consumption and to the delivery of oxygen O(2) to symbiosomes. In terms of tissue distribution, accumulates in root nodules after inoculation by bacteria of the genus Rhizobium. Expressed in mycorrhizal roots in the presence of the mycorrhizal fungus Glomus fasciculatum.

The protein localises to the cytoplasm. The protein resides in the cytosol. It localises to the nucleus. In terms of biological role, leghemoglobin that reversibly binds oxygen O(2) through a pentacoordinated heme iron. In root nodules, facilitates the diffusion of oxygen to the bacteroids while preventing the bacterial nitrogenase from being inactivated by buffering dioxygen, nitric oxide and carbon monoxide, and promoting the formation of reactive oxygen species (ROS, e.g. H(2)O(2)). This role is essential for symbiotic nitrogen fixation (SNF). This Vicia faba (Broad bean) protein is Leghemoglobin 29.